The sequence spans 237 residues: MSGSDTSGSVHVDEHGHGHGKASSSYDGAGAPAPAPAPFQGHRKAGSGSSDVPFLLRSGGSGGDGLRRCLGLIDFVLRVAAFGPTLAAAISIGTSDERLSVFTNYFQFRARFDDFPAFEFFIVANAIAAGYMVLSLPFSAATIMSSKATGVKLLLLICDTIMVGLLTAAASAAAAMVYVAHEGNLRANWVPICLQFHGFCQRTSGAVIASFLAVFVLMVLIVMAAFTMPRRTHHTAS.

The tract at residues 1–48 (MSGSDTSGSVHVDEHGHGHGKASSSYDGAGAPAPAPAPFQGHRKAGSG) is disordered. Residues 1–69 (MSGSDTSGSV…GSGGDGLRRC (69 aa)) are Cytoplasmic-facing. The helical transmembrane segment at 70 to 90 (LGLIDFVLRVAAFGPTLAAAI) threads the bilayer. Residues 91-117 (SIGTSDERLSVFTNYFQFRARFDDFPA) lie on the Extracellular side of the membrane. Residues 118-138 (FEFFIVANAIAAGYMVLSLPF) form a helical membrane-spanning segment. Residues 139–152 (SAATIMSSKATGVK) are Cytoplasmic-facing. Residues 153–173 (LLLLICDTIMVGLLTAAASAA) traverse the membrane as a helical segment. Residues 174–205 (AAMVYVAHEGNLRANWVPICLQFHGFCQRTSG) are Extracellular-facing. The helical transmembrane segment at 206–226 (AVIASFLAVFVLMVLIVMAAF) threads the bilayer. The Cytoplasmic portion of the chain corresponds to 227 to 237 (TMPRRTHHTAS).

The protein belongs to the Casparian strip membrane proteins (CASP) family. Homodimer and heterodimers.

It is found in the cell membrane. In terms of biological role, regulates membrane-cell wall junctions and localized cell wall deposition. Required for establishment of the Casparian strip membrane domain (CSD) and the subsequent formation of Casparian strips, a cell wall modification of the root endodermis that determines an apoplastic barrier between the intraorganismal apoplasm and the extraorganismal apoplasm and prevents lateral diffusion. The sequence is that of Casparian strip membrane protein 2 from Oryza sativa subsp. japonica (Rice).